The following is a 444-amino-acid chain: DNA repair protein RadA (444 aa).

Residues 10–27 form a C4-type zinc finger; it reads CQECGYKSVKWLGKCPSC. 91–98 contributes to the ATP binding site; that stretch reads GEPGIGKS. The RadA KNRFG motif motif lies at 247 to 251; that stretch reads KNRFG. Positions 345 to 444 are lon-protease-like; that stretch reads DVFVNVAGGM…HIQEAIEVLF (100 aa).

Belongs to the RecA family. RadA subfamily.

Functionally, DNA-dependent ATPase involved in processing of recombination intermediates, plays a role in repairing DNA breaks. Stimulates the branch migration of RecA-mediated strand transfer reactions, allowing the 3' invading strand to extend heteroduplex DNA faster. Binds ssDNA in the presence of ADP but not other nucleotides, has ATPase activity that is stimulated by ssDNA and various branched DNA structures, but inhibited by SSB. Does not have RecA's homology-searching function. The protein is DNA repair protein RadA of Aquifex aeolicus (strain VF5).